Reading from the N-terminus, the 212-residue chain is Adenylate kinase (212 aa).

Position 10–15 (10–15 (GAGKGT)) interacts with ATP. Residues 30 to 59 (STGDILREAMAQETELGQKAKSYIDAGELV) form an NMP region. AMP-binding positions include Thr-31, Arg-36, 57 to 59 (ELV), 84 to 87 (GYPR), and Gln-91. An LID region spans residues 125 to 158 (RRRVHEETGETYHLDHDPPPEDVDPDLIVQRSDD). Residues Arg-126 and 135–136 (TY) each bind ATP. The AMP site is built by Arg-155 and Arg-166. Gly-194 is an ATP binding site.

This sequence belongs to the adenylate kinase family. In terms of assembly, monomer.

The protein resides in the cytoplasm. The enzyme catalyses AMP + ATP = 2 ADP. It functions in the pathway purine metabolism; AMP biosynthesis via salvage pathway; AMP from ADP: step 1/1. In terms of biological role, catalyzes the reversible transfer of the terminal phosphate group between ATP and AMP. Plays an important role in cellular energy homeostasis and in adenine nucleotide metabolism. In Salinibacter ruber (strain DSM 13855 / M31), this protein is Adenylate kinase.